Consider the following 283-residue polypeptide: MGEILDGKKLAWELGEKLGSEVDSLKEHGVSPKLCVINIGDDPASKVYVASKKRKAEKLGIKQVVYQLPADESEEDVLKLIDSLNADPEVSSLMVQLPVPPQINADRVIERIDPEKDVDCLTPANIGRLWQGKHFVEPATAAGIIALLDHYQIDLTGKNAVIVGRSNIVGKPLAALMLERNASVSILHSRSRNLADLTKQADILVCAVGKAEMIKADMVKEGAVVIDVGINRVDGHLVGDVDFAPVKEKASWITPVPGGVGPLTVEFLMEEVIKLTRRQHGLD.

NADP(+) is bound by residues 164–166 (GRS), Ser-189, and Ile-230.

This sequence belongs to the tetrahydrofolate dehydrogenase/cyclohydrolase family. Homodimer.

The enzyme catalyses (6R)-5,10-methylene-5,6,7,8-tetrahydrofolate + NADP(+) = (6R)-5,10-methenyltetrahydrofolate + NADPH. It catalyses the reaction (6R)-5,10-methenyltetrahydrofolate + H2O = (6R)-10-formyltetrahydrofolate + H(+). It functions in the pathway one-carbon metabolism; tetrahydrofolate interconversion. In terms of biological role, catalyzes the oxidation of 5,10-methylenetetrahydrofolate to 5,10-methenyltetrahydrofolate and then the hydrolysis of 5,10-methenyltetrahydrofolate to 10-formyltetrahydrofolate. The sequence is that of Bifunctional protein FolD from Lactobacillus delbrueckii subsp. bulgaricus (strain ATCC 11842 / DSM 20081 / BCRC 10696 / JCM 1002 / NBRC 13953 / NCIMB 11778 / NCTC 12712 / WDCM 00102 / Lb 14).